The primary structure comprises 691 residues: Glycine--tRNA ligase beta subunit (691 aa).

Belongs to the class-II aminoacyl-tRNA synthetase family. As to quaternary structure, tetramer of two alpha and two beta subunits.

It is found in the cytoplasm. It catalyses the reaction tRNA(Gly) + glycine + ATP = glycyl-tRNA(Gly) + AMP + diphosphate. The chain is Glycine--tRNA ligase beta subunit from Levilactobacillus brevis (strain ATCC 367 / BCRC 12310 / CIP 105137 / JCM 1170 / LMG 11437 / NCIMB 947 / NCTC 947) (Lactobacillus brevis).